Reading from the N-terminus, the 282-residue chain is Dof zinc finger protein 4 (282 aa).

A Dof-type zinc finger spans residues 45 to 99 (VKCPRCESTNTKFCYYNNYNLSQPRHFCKSCRRYWTKGGVLRNVPVGGGCRKTKR). Residues Cys-47, Cys-50, Cys-72, and Cys-75 each coordinate Zn(2+). The segment at 89-161 (PVGGGCRKTK…TTPATPSSNT (73 aa)) is disordered. Composition is skewed to low complexity over residues 102 to 117 (SSSA…TAAT) and 125 to 161 (RASA…SSNT).

Its subcellular location is the nucleus. Functionally, transcription factor that may transactivate seed storage protein genes in developing seeds. The protein is Dof zinc finger protein 4 of Oryza sativa subsp. japonica (Rice).